The chain runs to 846 residues: DNA mismatch repair protein MutS (846 aa).

Residue 610–617 (GPNMGGKS) participates in ATP binding.

Belongs to the DNA mismatch repair MutS family.

This protein is involved in the repair of mismatches in DNA. It is possible that it carries out the mismatch recognition step. This protein has a weak ATPase activity. This Legionella pneumophila (strain Lens) protein is DNA mismatch repair protein MutS.